We begin with the raw amino-acid sequence, 416 residues long: Phosphoribosylamine--glycine ligase (416 aa).

The region spanning 105–310 (KSFLKKYRIK…PLELILAATQ (206 aa)) is the ATP-grasp domain. 131–192 (IYSLTPPIVV…EEFLDGYELS (62 aa)) is an ATP binding site. 2 residues coordinate Mg(2+): E281 and N283.

Belongs to the GARS family. The cofactor is Mg(2+). Mn(2+) is required as a cofactor.

The catalysed reaction is 5-phospho-beta-D-ribosylamine + glycine + ATP = N(1)-(5-phospho-beta-D-ribosyl)glycinamide + ADP + phosphate + H(+). Its pathway is purine metabolism; IMP biosynthesis via de novo pathway; N(1)-(5-phospho-D-ribosyl)glycinamide from 5-phospho-alpha-D-ribose 1-diphosphate: step 2/2. The chain is Phosphoribosylamine--glycine ligase from Campylobacter jejuni subsp. jejuni serotype O:2 (strain ATCC 700819 / NCTC 11168).